A 2063-amino-acid chain; its full sequence is Rho guanine nucleotide exchange factor 17 (2063 aa).

Disordered stretches follow at residues 22–365 (WSGG…MSDS), 380–466 (YLAS…SNPD), 485–581 (LRVR…AEED), and 602–958 (IQRM…RHVR). Low complexity predominate over residues 65-76 (PLAAPAQPRPLR). Positions 87–96 (RRFDAPRLDD) are enriched in basic and acidic residues. Residues 108–122 (PAAAEEAAEGPARGA) are compositionally biased toward low complexity. A phosphoserine mark is found at S142 and S152. Positions 225–250 (AGARASCSSSSIAASYPVSRSRAASS) are enriched in low complexity. S310 is subject to Phosphoserine. Polar residues predominate over residues 313 to 323 (LNLSSMNSAGV). Phosphoserine occurs at positions 326, 332, 383, 387, 395, 410, and 420. A compositionally biased stretch (polar residues) spans 388–397 (RGSSRYSSTE). Over residues 445–456 (ALRDGGFEPEKS) the composition is skewed to basic and acidic residues. Residues S461 and S546 each carry the phosphoserine modification. Over residues 562 to 573 (SALKSSSSELLL) the composition is skewed to low complexity. S619 bears the Phosphoserine mark. The span at 671–680 (LSSSSAQTNH) shows a compositional bias: polar residues. Residue S696 is modified to Phosphoserine. Phosphothreonine is present on residues T699 and T702. S735 is modified (phosphoserine). Residues 754-765 (SVDSNLLGSLSP) are compositionally biased toward polar residues. Residues 827–836 (SLSDPSRRGE) are compositionally biased toward basic and acidic residues. S914 carries the phosphoserine modification. The segment covering 917 to 928 (LIRRGSKKRPAR) has biased composition (basic residues). Basic and acidic residues predominate over residues 930–939 (SHQELRRDEG). S961 and S1002 each carry phosphoserine. A disordered region spans residues 1034–1060 (APPSAEAKPPEAARPADEPTPASKCCS). The span at 1041–1050 (KPPEAARPAD) shows a compositional bias: basic and acidic residues. The region spanning 1066-1254 (MRKHVAMTLL…KQVAERINKG (189 aa)) is the DH domain. S1331 bears the Phosphoserine mark. Disordered regions lie at residues 1564-1584 (HREPPPSLRSPPETAPEPAGP), 1616-1719 (GLEM…SSHG), 1991-2020 (TPPPPPDTGPEKLPSLEHRDSPWHRGPAPA), and 2036-2055 (FRLSSGGGSSSETVGRDDST). Pro residues predominate over residues 1568-1582 (PPSLRSPPETAPEPA). A compositionally biased stretch (low complexity) spans 1644–1680 (SPSPSGTLQSQASRSTISSSFGNEETPSSKEATAETT). Positions 2004–2013 (PSLEHRDSPW) are enriched in basic and acidic residues.

In terms of tissue distribution, highly expressed in the heart.

Acts as a guanine nucleotide exchange factor (GEF) for RhoA GTPases. The protein is Rho guanine nucleotide exchange factor 17 (ARHGEF17) of Homo sapiens (Human).